Here is a 261-residue protein sequence, read N- to C-terminus: Cytochrome c oxidase subunit 3 (261 aa).

At Met-1–Pro-15 the chain is on the mitochondrial matrix side. The chain crosses the membrane as a helical span at residues Trp-16–Trp-34. The Mitochondrial intermembrane segment spans residues Phe-35–Thr-40. A helical membrane pass occupies residues Met-41–Thr-66. Topologically, residues Tyr-67–Thr-72 are mitochondrial matrix. A helical transmembrane segment spans residues Ser-73 to Ser-105. Over Leu-106–Glu-128 the chain is Mitochondrial intermembrane. Residues Val-129–Met-152 traverse the membrane as a helical segment. Residues Lys-153–Asn-155 are Mitochondrial matrix-facing. A helical membrane pass occupies residues Lys-156–Glu-183. Residues Thr-184–Asp-190 lie on the Mitochondrial intermembrane side of the membrane. Residues Ser-191–Ala-223 traverse the membrane as a helical segment. Residues Lys-224–His-232 lie on the Mitochondrial matrix side of the membrane. Residues Phe-233–Val-256 form a helical membrane-spanning segment. The Mitochondrial intermembrane portion of the chain corresponds to Tyr-257–Ser-261.

The protein belongs to the cytochrome c oxidase subunit 3 family. In terms of assembly, component of the cytochrome c oxidase (complex IV, CIV), a multisubunit enzyme composed of 14 subunits. The complex is composed of a catalytic core of 3 subunits MT-CO1, MT-CO2 and MT-CO3, encoded in the mitochondrial DNA, and 11 supernumerary subunits COX4I, COX5A, COX5B, COX6A, COX6B, COX6C, COX7A, COX7B, COX7C, COX8 and NDUFA4, which are encoded in the nuclear genome. The complex exists as a monomer or a dimer and forms supercomplexes (SCs) in the inner mitochondrial membrane with NADH-ubiquinone oxidoreductase (complex I, CI) and ubiquinol-cytochrome c oxidoreductase (cytochrome b-c1 complex, complex III, CIII), resulting in different assemblies (supercomplex SCI(1)III(2)IV(1) and megacomplex MCI(2)III(2)IV(2)).

The protein resides in the mitochondrion inner membrane. It catalyses the reaction 4 Fe(II)-[cytochrome c] + O2 + 8 H(+)(in) = 4 Fe(III)-[cytochrome c] + 2 H2O + 4 H(+)(out). Functionally, component of the cytochrome c oxidase, the last enzyme in the mitochondrial electron transport chain which drives oxidative phosphorylation. The respiratory chain contains 3 multisubunit complexes succinate dehydrogenase (complex II, CII), ubiquinol-cytochrome c oxidoreductase (cytochrome b-c1 complex, complex III, CIII) and cytochrome c oxidase (complex IV, CIV), that cooperate to transfer electrons derived from NADH and succinate to molecular oxygen, creating an electrochemical gradient over the inner membrane that drives transmembrane transport and the ATP synthase. Cytochrome c oxidase is the component of the respiratory chain that catalyzes the reduction of oxygen to water. Electrons originating from reduced cytochrome c in the intermembrane space (IMS) are transferred via the dinuclear copper A center (CU(A)) of subunit 2 and heme A of subunit 1 to the active site in subunit 1, a binuclear center (BNC) formed by heme A3 and copper B (CU(B)). The BNC reduces molecular oxygen to 2 water molecules using 4 electrons from cytochrome c in the IMS and 4 protons from the mitochondrial matrix. The protein is Cytochrome c oxidase subunit 3 (MT-CO3) of Lycodon semicarinatus (Ryukyu odd-tooth snake).